The sequence spans 1091 residues: DNA mismatch repair protein Msh3 (1091 aa).

Low complexity-rich tracts occupy residues 1–15 (MPRG…TAAG) and 24–40 (LSRF…SASS). Residues 1 to 84 (MPRGKSASGG…EENISVASHH (84 aa)) are disordered. Position 33 is a phosphoserine (S33). Positions 43–54 (PAEKVTEGDSRK) are enriched in basic and acidic residues. 850–857 (GPNMGGKS) contacts ATP.

Belongs to the DNA mismatch repair MutS family. MSH3 subfamily. In terms of assembly, component of the DNA mismatch repair (MMR) complex composed at least of MSH2, MSH3, MSH6, PMS1 and MLH1. Heterodimer consisting of MSH2-MSH3 (MutS beta). Forms a ternary complex with MutL alpha (MLH1-PMS1). Interacts with EXO1. Interacts with MCM9.

Component of the post-replicative DNA mismatch repair system (MMR). Heterodimerizes with MSH2 to form MutS beta which binds to DNA mismatches thereby initiating DNA repair. When bound, the MutS beta heterodimer bends the DNA helix and shields approximately 20 base pairs. MutS beta recognizes large insertion-deletion loops (IDL) up to 13 nucleotides long. After mismatch binding, forms a ternary complex with the MutL alpha heterodimer, which is thought to be responsible for directing the downstream MMR events, including strand discrimination, excision, and resynthesis. The protein is DNA mismatch repair protein Msh3 (Msh3) of Mus musculus (Mouse).